We begin with the raw amino-acid sequence, 200 residues long: 3-isopropylmalate dehydratase small subunit 2 (200 aa).

Belongs to the LeuD family. LeuD type 1 subfamily. As to quaternary structure, heterodimer of LeuC and LeuD.

It catalyses the reaction (2R,3S)-3-isopropylmalate = (2S)-2-isopropylmalate. The protein operates within amino-acid biosynthesis; L-leucine biosynthesis; L-leucine from 3-methyl-2-oxobutanoate: step 2/4. In terms of biological role, catalyzes the isomerization between 2-isopropylmalate and 3-isopropylmalate, via the formation of 2-isopropylmaleate. This Mannheimia succiniciproducens (strain KCTC 0769BP / MBEL55E) protein is 3-isopropylmalate dehydratase small subunit 2.